Reading from the N-terminus, the 82-residue chain is Small ribosomal subunit protein uS17 (82 aa).

The protein belongs to the universal ribosomal protein uS17 family. As to quaternary structure, part of the 30S ribosomal subunit.

Functionally, one of the primary rRNA binding proteins, it binds specifically to the 5'-end of 16S ribosomal RNA. This chain is Small ribosomal subunit protein uS17, found in Shewanella halifaxensis (strain HAW-EB4).